The sequence spans 122 residues: Small ribosomal subunit protein uS13 (122 aa).

The disordered stretch occupies residues 95–122 (NLPVRGQRTHTNARTRKGKAKPIAGKKK).

This sequence belongs to the universal ribosomal protein uS13 family. Part of the 30S ribosomal subunit. Forms a loose heterodimer with protein S19. Forms two bridges to the 50S subunit in the 70S ribosome.

Functionally, located at the top of the head of the 30S subunit, it contacts several helices of the 16S rRNA. In the 70S ribosome it contacts the 23S rRNA (bridge B1a) and protein L5 of the 50S subunit (bridge B1b), connecting the 2 subunits; these bridges are implicated in subunit movement. Contacts the tRNAs in the A and P-sites. The polypeptide is Small ribosomal subunit protein uS13 (Methylobacterium nodulans (strain LMG 21967 / CNCM I-2342 / ORS 2060)).